A 1158-amino-acid polypeptide reads, in one-letter code: Putative HERC2-like protein 3 (1158 aa).

Positions 281–302 are disordered; it reads PRKKRVPKKPESTDDEEKIGNE. A compositionally biased stretch (acidic residues) spans 293–302; it reads TDDEEKIGNE. The MIB/HERC2 domain maps to 587–660; that stretch reads SGPELAAMMK…NYDLKLAELP (74 aa). Residues 662–684 form a disordered region; sequence PAQPSAEDSDTEDDSEAEQTERN. Positions 668 to 679 are enriched in acidic residues; sequence EDSDTEDDSEAE.

The protein is Putative HERC2-like protein 3 (HERC2P3) of Homo sapiens (Human).